Reading from the N-terminus, the 283-residue chain is 2-dehydro-3-deoxyphosphooctonate aldolase (283 aa).

Belongs to the KdsA family.

It is found in the cytoplasm. It catalyses the reaction D-arabinose 5-phosphate + phosphoenolpyruvate + H2O = 3-deoxy-alpha-D-manno-2-octulosonate-8-phosphate + phosphate. The protein operates within carbohydrate biosynthesis; 3-deoxy-D-manno-octulosonate biosynthesis; 3-deoxy-D-manno-octulosonate from D-ribulose 5-phosphate: step 2/3. It participates in bacterial outer membrane biogenesis; lipopolysaccharide biosynthesis. The protein is 2-dehydro-3-deoxyphosphooctonate aldolase of Synechococcus sp. (strain WH7803).